Reading from the N-terminus, the 208-residue chain is Holliday junction branch migration complex subunit RuvA (208 aa).

A domain I region spans residues Met1 to Arg64. The domain II stretch occupies residues Val65–Ile143. The segment at Ala144–Arg152 is flexible linker. Positions Thr153–Arg208 are domain III.

It belongs to the RuvA family. Homotetramer. Forms an RuvA(8)-RuvB(12)-Holliday junction (HJ) complex. HJ DNA is sandwiched between 2 RuvA tetramers; dsDNA enters through RuvA and exits via RuvB. An RuvB hexamer assembles on each DNA strand where it exits the tetramer. Each RuvB hexamer is contacted by two RuvA subunits (via domain III) on 2 adjacent RuvB subunits; this complex drives branch migration. In the full resolvosome a probable DNA-RuvA(4)-RuvB(12)-RuvC(2) complex forms which resolves the HJ.

It is found in the cytoplasm. Its function is as follows. The RuvA-RuvB-RuvC complex processes Holliday junction (HJ) DNA during genetic recombination and DNA repair, while the RuvA-RuvB complex plays an important role in the rescue of blocked DNA replication forks via replication fork reversal (RFR). RuvA specifically binds to HJ cruciform DNA, conferring on it an open structure. The RuvB hexamer acts as an ATP-dependent pump, pulling dsDNA into and through the RuvAB complex. HJ branch migration allows RuvC to scan DNA until it finds its consensus sequence, where it cleaves and resolves the cruciform DNA. This Methylorubrum extorquens (strain CM4 / NCIMB 13688) (Methylobacterium extorquens) protein is Holliday junction branch migration complex subunit RuvA.